The primary structure comprises 482 residues: Probable cytochrome P450 508D1 (482 aa).

Residues 1–21 (MVYLKNILIFLIIFLINPLVK) traverse the membrane as a helical segment. Cys428 is a heme binding site.

The protein belongs to the cytochrome P450 family. The cofactor is heme.

The protein resides in the membrane. This is Probable cytochrome P450 508D1 (cyp508D1) from Dictyostelium discoideum (Social amoeba).